The chain runs to 336 residues: Ribosomal RNA large subunit methyltransferase F (336 aa).

This sequence belongs to the methyltransferase superfamily. METTL16/RlmF family.

Its subcellular location is the cytoplasm. It catalyses the reaction adenosine(1618) in 23S rRNA + S-adenosyl-L-methionine = N(6)-methyladenosine(1618) in 23S rRNA + S-adenosyl-L-homocysteine + H(+). Functionally, specifically methylates the adenine in position 1618 of 23S rRNA. The polypeptide is Ribosomal RNA large subunit methyltransferase F (Yersinia pestis bv. Antiqua (strain Angola)).